The chain runs to 662 residues: UvrABC system protein B (662 aa).

The region spanning 25-182 is the Helicase ATP-binding domain; sequence KGIEKREKFQ…KKLVEIQYER (158 aa). Residue 38 to 45 participates in ATP binding; sequence GVTGSGKT. A Beta-hairpin motif is present at residues 91–114; the sequence is YYDYYQPEAYVAQSDTYIEKDASI. A Helicase C-terminal domain is found at 429 to 595; sequence QIDDLYTSIQ…TIIKDIREVI (167 aa). Positions 622-657 constitute a UVR domain; sequence DKLIEKYEEEMKEAAQNLQFEKAAHLRDVIYKLKKD.

Belongs to the UvrB family. As to quaternary structure, forms a heterotetramer with UvrA during the search for lesions. Interacts with UvrC in an incision complex.

The protein resides in the cytoplasm. Functionally, the UvrABC repair system catalyzes the recognition and processing of DNA lesions. A damage recognition complex composed of 2 UvrA and 2 UvrB subunits scans DNA for abnormalities. Upon binding of the UvrA(2)B(2) complex to a putative damaged site, the DNA wraps around one UvrB monomer. DNA wrap is dependent on ATP binding by UvrB and probably causes local melting of the DNA helix, facilitating insertion of UvrB beta-hairpin between the DNA strands. Then UvrB probes one DNA strand for the presence of a lesion. If a lesion is found the UvrA subunits dissociate and the UvrB-DNA preincision complex is formed. This complex is subsequently bound by UvrC and the second UvrB is released. If no lesion is found, the DNA wraps around the other UvrB subunit that will check the other stand for damage. The protein is UvrABC system protein B of Clostridium botulinum (strain Langeland / NCTC 10281 / Type F).